The sequence spans 44 residues: Photosystem II reaction center protein K (44 aa).

A propeptide spanning residues 1-7 is cleaved from the precursor; sequence MTTLLLA. Residues 19-39 form a helical membrane-spanning segment; it reads IVDVLPVIPLLFLLLAFVWQA.

It belongs to the PsbK family. As to quaternary structure, PSII is composed of 1 copy each of membrane proteins PsbA, PsbB, PsbC, PsbD, PsbE, PsbF, PsbH, PsbI, PsbJ, PsbK, PsbL, PsbM, PsbT, PsbX, PsbY, PsbZ, Psb30/Ycf12, at least 3 peripheral proteins of the oxygen-evolving complex and a large number of cofactors. It forms dimeric complexes.

It localises to the plastid. The protein resides in the chloroplast thylakoid membrane. One of the components of the core complex of photosystem II (PSII). PSII is a light-driven water:plastoquinone oxidoreductase that uses light energy to abstract electrons from H(2)O, generating O(2) and a proton gradient subsequently used for ATP formation. It consists of a core antenna complex that captures photons, and an electron transfer chain that converts photonic excitation into a charge separation. This is Photosystem II reaction center protein K from Tupiella akineta (Green alga).